The sequence spans 289 residues: Glycine--tRNA ligase alpha subunit (289 aa).

The protein belongs to the class-II aminoacyl-tRNA synthetase family. In terms of assembly, tetramer of two alpha and two beta subunits.

Its subcellular location is the cytoplasm. The catalysed reaction is tRNA(Gly) + glycine + ATP = glycyl-tRNA(Gly) + AMP + diphosphate. The polypeptide is Glycine--tRNA ligase alpha subunit (glyQ) (Rickettsia prowazekii (strain Madrid E)).